Here is a 125-residue protein sequence, read N- to C-terminus: Small ribosomal subunit protein uS13 (125 aa).

A disordered region spans residues 95 to 125; that stretch reads GLPVRGQRTKNNCRTRKGKRKTVANKKKATK.

This sequence belongs to the universal ribosomal protein uS13 family. In terms of assembly, part of the 30S ribosomal subunit. Forms a loose heterodimer with protein S19. Forms two bridges to the 50S subunit in the 70S ribosome.

Located at the top of the head of the 30S subunit, it contacts several helices of the 16S rRNA. In the 70S ribosome it contacts the 23S rRNA (bridge B1a) and protein L5 of the 50S subunit (bridge B1b), connecting the 2 subunits; these bridges are implicated in subunit movement. Contacts the tRNAs in the A and P-sites. This is Small ribosomal subunit protein uS13 from Cytophaga hutchinsonii (strain ATCC 33406 / DSM 1761 / CIP 103989 / NBRC 15051 / NCIMB 9469 / D465).